We begin with the raw amino-acid sequence, 341 residues long: Phosphate acyltransferase (341 aa).

The protein belongs to the PlsX family. Homodimer. Probably interacts with PlsY.

It localises to the cytoplasm. It carries out the reaction a fatty acyl-[ACP] + phosphate = an acyl phosphate + holo-[ACP]. It functions in the pathway lipid metabolism; phospholipid metabolism. Catalyzes the reversible formation of acyl-phosphate (acyl-PO(4)) from acyl-[acyl-carrier-protein] (acyl-ACP). This enzyme utilizes acyl-ACP as fatty acyl donor, but not acyl-CoA. The protein is Phosphate acyltransferase of Idiomarina loihiensis (strain ATCC BAA-735 / DSM 15497 / L2-TR).